Consider the following 322-residue polypeptide: Phosphatidylserine decarboxylase proenzyme (322 aa).

Active-site charge relay system; for autoendoproteolytic cleavage activity residues include Asp-90, His-147, and Ser-254. Ser-254 functions as the Schiff-base intermediate with substrate; via pyruvic acid; for decarboxylase activity in the catalytic mechanism. Position 254 is a pyruvic acid (Ser); by autocatalysis (Ser-254). A disordered region spans residues 294 to 322 (EAEPAPLPEEEINAEHDASPLVDDKKDES). Residues 306–322 (NAEHDASPLVDDKKDES) show a composition bias toward basic and acidic residues.

This sequence belongs to the phosphatidylserine decarboxylase family. PSD-B subfamily. Prokaryotic type I sub-subfamily. As to quaternary structure, heterodimer of a large membrane-associated beta subunit and a small pyruvoyl-containing alpha subunit. Pyruvate serves as cofactor. Is synthesized initially as an inactive proenzyme. Formation of the active enzyme involves a self-maturation process in which the active site pyruvoyl group is generated from an internal serine residue via an autocatalytic post-translational modification. Two non-identical subunits are generated from the proenzyme in this reaction, and the pyruvate is formed at the N-terminus of the alpha chain, which is derived from the carboxyl end of the proenzyme. The autoendoproteolytic cleavage occurs by a canonical serine protease mechanism, in which the side chain hydroxyl group of the serine supplies its oxygen atom to form the C-terminus of the beta chain, while the remainder of the serine residue undergoes an oxidative deamination to produce ammonia and the pyruvoyl prosthetic group on the alpha chain. During this reaction, the Ser that is part of the protease active site of the proenzyme becomes the pyruvoyl prosthetic group, which constitutes an essential element of the active site of the mature decarboxylase.

Its subcellular location is the cell membrane. The enzyme catalyses a 1,2-diacyl-sn-glycero-3-phospho-L-serine + H(+) = a 1,2-diacyl-sn-glycero-3-phosphoethanolamine + CO2. It functions in the pathway phospholipid metabolism; phosphatidylethanolamine biosynthesis; phosphatidylethanolamine from CDP-diacylglycerol: step 2/2. In terms of biological role, catalyzes the formation of phosphatidylethanolamine (PtdEtn) from phosphatidylserine (PtdSer). The chain is Phosphatidylserine decarboxylase proenzyme from Citrobacter koseri (strain ATCC BAA-895 / CDC 4225-83 / SGSC4696).